Consider the following 470-residue polypeptide: Acetyl-CoA decarbonylase/synthase complex subunit gamma (470 aa).

The 4Fe-4S domain occupies 1–62 (MKVKSPLEVY…DPKVKKKLEE (62 aa)). Residues C18, C21, C26, and C43 each coordinate [4Fe-4S] cluster.

As to quaternary structure, heterodimer of delta and gamma chains. The ACDS complex is made up of alpha, epsilon, beta, gamma and delta chains with a probable stoichiometry of (alpha(2)epsilon(2))(4)-beta(8)-(gamma(1)delta(1))(8). Corrinoid is required as a cofactor. The cofactor is [4Fe-4S] cluster.

The enzyme catalyses 5,6,7,8-tetrahydrosarcinapterin + methyl-Co(III)-[corrinoid Fe-S protein] = 5-methyltetrahydrosarcinapterin + Co(I)-[corrinoid Fe-S protein] + H(+). In terms of biological role, part of a complex that catalyzes the reversible cleavage of acetyl-CoA, allowing autotrophic growth from CO(2). In Archaeoglobus fulgidus (strain ATCC 49558 / DSM 4304 / JCM 9628 / NBRC 100126 / VC-16), this protein is Acetyl-CoA decarbonylase/synthase complex subunit gamma.